Consider the following 253-residue polypeptide: 3-dehydroquinate dehydratase (253 aa).

3-dehydroquinate-binding positions include 46 to 48 (EWR) and Arg82. Catalysis depends on His143, which acts as the Proton donor/acceptor. Residue Lys170 is the Schiff-base intermediate with substrate of the active site. 3-dehydroquinate is bound by residues Arg213, Ser232, and Gln236.

Belongs to the type-I 3-dehydroquinase family. Homodimer.

It carries out the reaction 3-dehydroquinate = 3-dehydroshikimate + H2O. The protein operates within metabolic intermediate biosynthesis; chorismate biosynthesis; chorismate from D-erythrose 4-phosphate and phosphoenolpyruvate: step 3/7. Inhibited by flavonoids such as datiscetin, naringenin, marein and phloretin. Involved in the third step of the chorismate pathway, which leads to the biosynthesis of aromatic amino acids (AroAA). Catalyzes the cis-dehydration of 3-dehydroquinate (DHQ) and introduces the first double bond of the aromatic ring to yield 3-dehydroshikimate. The reaction involves the formation of an imine intermediate between the keto group of 3-dehydroquinate and the epsilon-amino group of Lys-170 at the active site. The chain is 3-dehydroquinate dehydratase from Enterococcus faecalis (strain ATCC 700802 / V583).